The chain runs to 735 residues: Ribosomal protein S6 kinase alpha-1 (735 aa).

Ser54 is subject to Phosphoserine. The 260-residue stretch at 62 to 321 folds into the Protein kinase 1 domain; that stretch reads FELLKVLGQG…AEEIKRHVFY (260 aa). ATP is bound by residues 68–76 and Lys94; that span reads LGQGSFGKV. Asp187 serves as the catalytic Proton acceptor. Phosphoserine; by PDPK1 is present on Ser221. The residue at position 307 (Ser307) is a Phosphoserine. The AGC-kinase C-terminal domain maps to 322–391; it reads STIDWNKLYR…VATGLMEDDG (70 aa). Phosphothreonine is present on Thr359. Phosphoserine is present on residues Ser363 and Ser369. Ser380 is subject to Phosphoserine; by autocatalysis. The region spanning 418–675 is the Protein kinase 2 domain; it reads YVVKETIGVG…AKQVLQHPWV (258 aa). Residues 424–432 and Lys447 contribute to the ATP site; that span reads IGVGSYSEC. Catalysis depends on Asp535, which acts as the Proton acceptor. Position 573 is a phosphothreonine (Thr573). Ser732 carries the post-translational modification Phosphoserine.

Belongs to the protein kinase superfamily. AGC Ser/Thr protein kinase family. S6 kinase subfamily. Forms a complex with either MAPK1/ERK2 or MAPK3/ERK1 in quiescent cells. Transiently dissociates following mitogenic stimulation. Interacts with ETV1/ER81 and FGFR1. In terms of assembly, (Microbial infection) Interacts with Kaposi's sarcoma-associated herpesvirus/HHV-8 protein ORF45; this interaction allows RPS6KA1 activation. It depends on Mg(2+) as a cofactor. Activated by phosphorylation at Ser-221 by PDPK1. Autophosphorylated on Ser-380, as part of the activation process. May be phosphorylated at Thr-359 and Ser-363 by MAPK1/ERK2 and MAPK3/ERK1. Post-translationally, N-terminal myristoylation results in an activated kinase in the absence of added growth factors.

The protein resides in the nucleus. It localises to the cytoplasm. The catalysed reaction is L-seryl-[protein] + ATP = O-phospho-L-seryl-[protein] + ADP + H(+). The enzyme catalyses L-threonyl-[protein] + ATP = O-phospho-L-threonyl-[protein] + ADP + H(+). With respect to regulation, upon extracellular signal or mitogen stimulation, phosphorylated at Thr-573 in the C-terminal kinase domain (CTKD) by MAPK1/ERK2 and MAPK3/ERK1. The activated CTKD then autophosphorylates Ser-380, allowing binding of PDPK1, which in turn phosphorylates Ser-221 in the N-terminal kinase domain (NTDK) leading to the full activation of the protein and subsequent phosphorylation of the substrates by the NTKD. Functionally, serine/threonine-protein kinase that acts downstream of ERK (MAPK1/ERK2 and MAPK3/ERK1) signaling and mediates mitogenic and stress-induced activation of the transcription factors CREB1, ETV1/ER81 and NR4A1/NUR77, regulates translation through RPS6 and EIF4B phosphorylation, and mediates cellular proliferation, survival, and differentiation by modulating mTOR signaling and repressing pro-apoptotic function of BAD and DAPK1. In fibroblast, is required for EGF-stimulated phosphorylation of CREB1, which results in the subsequent transcriptional activation of several immediate-early genes. In response to mitogenic stimulation (EGF and PMA), phosphorylates and activates NR4A1/NUR77 and ETV1/ER81 transcription factors and the cofactor CREBBP. Upon insulin-derived signal, acts indirectly on the transcription regulation of several genes by phosphorylating GSK3B at 'Ser-9' and inhibiting its activity. Phosphorylates RPS6 in response to serum or EGF via an mTOR-independent mechanism and promotes translation initiation by facilitating assembly of the pre-initiation complex. In response to insulin, phosphorylates EIF4B, enhancing EIF4B affinity for the EIF3 complex and stimulating cap-dependent translation. Is involved in the mTOR nutrient-sensing pathway by directly phosphorylating TSC2 at 'Ser-1798', which potently inhibits TSC2 ability to suppress mTOR signaling, and mediates phosphorylation of RPTOR, which regulates mTORC1 activity and may promote rapamycin-sensitive signaling independently of the PI3K/AKT pathway. Also involved in feedback regulation of mTORC1 and mTORC2 by phosphorylating DEPTOR. Mediates cell survival by phosphorylating the pro-apoptotic proteins BAD and DAPK1 and suppressing their pro-apoptotic function. Promotes the survival of hepatic stellate cells by phosphorylating CEBPB in response to the hepatotoxin carbon tetrachloride (CCl4). Mediates induction of hepatocyte prolifration by TGFA through phosphorylation of CEBPB. Is involved in cell cycle regulation by phosphorylating the CDK inhibitor CDKN1B, which promotes CDKN1B association with 14-3-3 proteins and prevents its translocation to the nucleus and inhibition of G1 progression. Phosphorylates EPHA2 at 'Ser-897', the RPS6KA-EPHA2 signaling pathway controls cell migration. In response to mTORC1 activation, phosphorylates EIF4B at 'Ser-406' and 'Ser-422' which stimulates bicarbonate cotransporter SLC4A7 mRNA translation, increasing SLC4A7 protein abundance and function. (Microbial infection) Promotes the late transcription and translation of viral lytic genes during Kaposi's sarcoma-associated herpesvirus/HHV-8 infection, when constitutively activated. This chain is Ribosomal protein S6 kinase alpha-1 (RPS6KA1), found in Homo sapiens (Human).